Consider the following 1272-residue polypeptide: AF4/FMR2 family member 2 (1272 aa).

Disordered stretches follow at residues 151-190, 204-231, 372-401, 422-497, 557-694, 715-743, and 772-899; these read SNRK…DPPQ, PQIG…DTFK, TLQK…EDDL, KAKP…QLDK, IREK…ETLQ, TLST…PAMQ, and PGQN…QDKN. Basic and acidic residues predominate over residues 155-164; sequence SKSEWPRDSH. Positions 165–179 are enriched in low complexity; it reads NTSPAQASQTSSQPN. Polar residues predominate over residues 180–189; the sequence is KMQTSTQDPP. The segment covering 210–227 has biased composition (low complexity); the sequence is EKSNPSSKEENNPNSGGE. Positions 374-384 are enriched in polar residues; it reads QKWSDPSSRAS. A compositionally biased stretch (basic and acidic residues) spans 387 to 396; sequence MLEDDLKLSS. A Phosphoserine modification is found at serine 395. Polar residues predominate over residues 436 to 450; sequence TPQSTPATQTNVGSG. Phosphothreonine is present on threonine 482. Over residues 580–590 the composition is skewed to polar residues; it reads STSVDTVSQRT. Basic and acidic residues predominate over residues 620 to 633; sequence PKEKGSVELPDPPR. Residues 634–644 show a composition bias toward basic residues; that stretch reads SRNKATAHKPV. Low complexity predominate over residues 715-734; the sequence is TLSTLTNGNSNNLSTSNEET. A compositionally biased stretch (basic and acidic residues) spans 815–831; it reads PAETAEKIPEKKQRLED. Positions 841 to 850 are enriched in pro residues; the sequence is CISPAPPHKP. A compositionally biased stretch (polar residues) spans 887 to 899; that stretch reads VSGNNGHFGQDKN.

This sequence belongs to the AF4 family. In terms of tissue distribution, highly expressed in the hippocampus, the piriform cortex, Purkinje cells and the cingulate gyrus.

The protein resides in the nucleus speckle. Its function is as follows. RNA-binding protein. Might be involved in alternative splicing regulation through an interaction with G-quartet RNA structure. The sequence is that of AF4/FMR2 family member 2 from Mus musculus (Mouse).